A 471-amino-acid polypeptide reads, in one-letter code: 3-isopropylmalate dehydratase large subunit (471 aa).

[4Fe-4S] cluster is bound by residues Cys-347, Cys-407, and Cys-410.

The protein belongs to the aconitase/IPM isomerase family. LeuC type 1 subfamily. In terms of assembly, heterodimer of LeuC and LeuD. [4Fe-4S] cluster is required as a cofactor.

It carries out the reaction (2R,3S)-3-isopropylmalate = (2S)-2-isopropylmalate. It participates in amino-acid biosynthesis; L-leucine biosynthesis; L-leucine from 3-methyl-2-oxobutanoate: step 2/4. Catalyzes the isomerization between 2-isopropylmalate and 3-isopropylmalate, via the formation of 2-isopropylmaleate. The chain is 3-isopropylmalate dehydratase large subunit from Geobacillus kaustophilus (strain HTA426).